Reading from the N-terminus, the 225-residue chain is Ribonuclease 3 (225 aa).

Positions 7–132 (MKAFEARLGY…VIAAVYRDGG (126 aa)) constitute an RNase III domain. Glu-45 serves as a coordination point for Mg(2+). The active site involves Asp-49. Asp-118 and Glu-121 together coordinate Mg(2+). Residue Glu-121 is part of the active site. Residues 157 to 225 (DAKTALQEWA…AARKLLDSLD (69 aa)) form the DRBM domain.

It belongs to the ribonuclease III family. In terms of assembly, homodimer. Mg(2+) is required as a cofactor.

Its subcellular location is the cytoplasm. The enzyme catalyses Endonucleolytic cleavage to 5'-phosphomonoester.. Digests double-stranded RNA. Involved in the processing of primary rRNA transcript to yield the immediate precursors to the large and small rRNAs (23S and 16S). Processes some mRNAs, and tRNAs when they are encoded in the rRNA operon. Processes pre-crRNA and tracrRNA of type II CRISPR loci if present in the organism. The sequence is that of Ribonuclease 3 from Ruegeria pomeroyi (strain ATCC 700808 / DSM 15171 / DSS-3) (Silicibacter pomeroyi).